The following is a 365-amino-acid chain: Flagellar P-ring protein (365 aa).

The N-terminal stretch at 1-19 (MIKFLSALILLLVTTAAQA) is a signal peptide.

Belongs to the FlgI family. The basal body constitutes a major portion of the flagellar organelle and consists of four rings (L,P,S, and M) mounted on a central rod.

The protein resides in the periplasm. It localises to the bacterial flagellum basal body. Its function is as follows. Assembles around the rod to form the L-ring and probably protects the motor/basal body from shearing forces during rotation. The chain is Flagellar P-ring protein from Shigella dysenteriae serotype 1 (strain Sd197).